The primary structure comprises 149 residues: Transcriptional repressor NrdR (149 aa).

A zinc finger spans residues 3–34 (CPYCSYEESKVVDSRSAEDYNAIRRRRECLRC). Positions 49 to 139 (ILVIKKDLSR…VYRQFKDINT (91 aa)) constitute an ATP-cone domain.

The protein belongs to the NrdR family. Requires Zn(2+) as cofactor.

Functionally, negatively regulates transcription of bacterial ribonucleotide reductase nrd genes and operons by binding to NrdR-boxes. This is Transcriptional repressor NrdR from Clostridium perfringens (strain ATCC 13124 / DSM 756 / JCM 1290 / NCIMB 6125 / NCTC 8237 / Type A).